A 232-amino-acid chain; its full sequence is Chaperone protein LpfB (232 aa).

The first 23 residues, 1–23 (MNRSRLISCTALVLALIAQNSFA), serve as a signal peptide directing secretion.

This sequence belongs to the periplasmic pilus chaperone family.

It localises to the periplasm. Its function is as follows. Required for the biogenesis of long polar fimbria; binds and interact with LpfA. The polypeptide is Chaperone protein LpfB (lpfB) (Salmonella typhimurium (strain LT2 / SGSC1412 / ATCC 700720)).